A 219-amino-acid chain; its full sequence is Protein-L-isoaspartate O-methyltransferase 1 (219 aa).

Residue Ser-67 is part of the active site.

The protein belongs to the methyltransferase superfamily. L-isoaspartyl/D-aspartyl protein methyltransferase family.

It is found in the cytoplasm. The enzyme catalyses [protein]-L-isoaspartate + S-adenosyl-L-methionine = [protein]-L-isoaspartate alpha-methyl ester + S-adenosyl-L-homocysteine. In terms of biological role, catalyzes the methyl esterification of L-isoaspartyl residues in peptides and proteins that result from spontaneous decomposition of normal L-aspartyl and L-asparaginyl residues. It plays a role in the repair and/or degradation of damaged proteins. The sequence is that of Protein-L-isoaspartate O-methyltransferase 1 from Geotalea uraniireducens (strain Rf4) (Geobacter uraniireducens).